The following is a 396-amino-acid chain: NADH-quinone oxidoreductase subunit D 1 (396 aa).

It belongs to the complex I 49 kDa subunit family. In terms of assembly, NDH-1 is composed of 14 different subunits. Subunits NuoB, C, D, E, F, and G constitute the peripheral sector of the complex.

The protein localises to the cell inner membrane. It catalyses the reaction a quinone + NADH + 5 H(+)(in) = a quinol + NAD(+) + 4 H(+)(out). Functionally, NDH-1 shuttles electrons from NADH, via FMN and iron-sulfur (Fe-S) centers, to quinones in the respiratory chain. The immediate electron acceptor for the enzyme in this species is believed to be ubiquinone. Couples the redox reaction to proton translocation (for every two electrons transferred, four hydrogen ions are translocated across the cytoplasmic membrane), and thus conserves the redox energy in a proton gradient. The polypeptide is NADH-quinone oxidoreductase subunit D 1 (Rhizobium meliloti (strain 1021) (Ensifer meliloti)).